A 308-amino-acid polypeptide reads, in one-letter code: Growth/differentiation factor 15 (308 aa).

Residues 1–29 (MPGQELRTVNGSQMLLVLLVLSWLPHGGA) form the signal peptide. Positions 30-194 (LSLAEASRAS…RPQAARGRRR (165 aa)) are excised as a propeptide. N70 is a glycosylation site (N-linked (GlcNAc...) asparagine). The segment at 152–177 (APALHLRLSPPPSQSDQLLAESSSAR) is disordered. Over residues 165–177 (QSDQLLAESSSAR) the composition is skewed to polar residues. 4 cysteine pairs are disulfide-bonded: C203–C210, C211–C274, C240–C305, and C244–C307.

It belongs to the TGF-beta family. Homodimer; disulfide-linked. Interacts with GFRAL and RET; ligand of GFRAL, which mediates GDF15 internalization and cellular signaling through interaction with RET via the formation of a 2:2:2 ternary complex composed of GDF15, GFRAL and RET. Detected in plasma (at protein level). Highly expressed in placenta, with lower levels in prostate and colon and some expression in kidney.

It is found in the secreted. Hormone produced in response to various stresses to confer information about those stresses to the brain, and trigger an aversive response, characterized by nausea, vomiting, and/or loss of appetite. The aversive response is both required to reduce continuing exposure to those stresses at the time of exposure and to promote avoidance behavior in the future. Acts by binding to its receptor, GFRAL, activating GFRAL-expressing neurons localized in the area postrema and nucleus tractus solitarius of the brainstem. It then triggers the activation of neurons localized within the parabrachial nucleus and central amygdala, which constitutes part of the 'emergency circuit' that shapes responses to stressful conditions. The GDF15-GFRAL signal induces expression of genes involved in metabolism, such as lipid metabolism in adipose tissues. Required for avoidance behavior in response to food allergens: induced downstream of mast cell activation to promote aversion and minimize harmful effects of exposure to noxious substances. In addition to suppress appetite, also promotes weight loss by enhancing energy expenditure in muscle: acts by increasing calcium futile cycling in muscle. Contributes to the effect of metformin, an anti-diabetic drug, on appetite reduction and weight loss: produced in the kidney in response to metformin treatment, thereby activating the GDF15-GFRAL response, leading to reduced appetite and weight. The contribution of GDF15 to weight loss following metformin treatment is however limited and subject to discussion. Produced in response to anticancer drugs, such as camptothecin or cisplatin, promoting nausea, vomiting and contributing to malnutrition. Overproduced in many cancers, promoting anorexia in cancer (cachexia). Responsible for the risk of nausea and vomiting during pregnancy: high levels of GDF15 during pregnancy, mostly originating from the fetus, are associated with increased nausea and vomiting. Maternal sensitivity to nausea is probably determined by pre-pregnancy exposure to GDF15, women with naturally high level of GDF15 being less susceptible to nausea than women with low levels of GDF15 before pregnancy. Promotes metabolic adaptation in response to systemic inflammation caused by bacterial and viral infections in order to promote tissue tolerance and prevent tissue damage. Required for tissue tolerance in response to myocardial infarction by acting as an inhibitor of leukocyte integring activation, thereby protecting against cardiac rupture. Inhibits growth hormone signaling on hepatocytes. The protein is Growth/differentiation factor 15 of Homo sapiens (Human).